We begin with the raw amino-acid sequence, 446 residues long: Na(+)-translocating NADH-quinone reductase subunit A (446 aa).

The protein belongs to the NqrA family. In terms of assembly, composed of six subunits; NqrA, NqrB, NqrC, NqrD, NqrE and NqrF.

It carries out the reaction a ubiquinone + n Na(+)(in) + NADH + H(+) = a ubiquinol + n Na(+)(out) + NAD(+). Its function is as follows. NQR complex catalyzes the reduction of ubiquinone-1 to ubiquinol by two successive reactions, coupled with the transport of Na(+) ions from the cytoplasm to the periplasm. NqrA to NqrE are probably involved in the second step, the conversion of ubisemiquinone to ubiquinol. The protein is Na(+)-translocating NADH-quinone reductase subunit A of Histophilus somni (strain 129Pt) (Haemophilus somnus).